A 256-amino-acid chain; its full sequence is Indole-3-glycerol phosphate synthase (256 aa).

It belongs to the TrpC family.

It carries out the reaction 1-(2-carboxyphenylamino)-1-deoxy-D-ribulose 5-phosphate + H(+) = (1S,2R)-1-C-(indol-3-yl)glycerol 3-phosphate + CO2 + H2O. The protein operates within amino-acid biosynthesis; L-tryptophan biosynthesis; L-tryptophan from chorismate: step 4/5. This is Indole-3-glycerol phosphate synthase from Caldanaerobacter subterraneus subsp. tengcongensis (strain DSM 15242 / JCM 11007 / NBRC 100824 / MB4) (Thermoanaerobacter tengcongensis).